Reading from the N-terminus, the 844-residue chain is Striatin-interacting proteins 2 (844 aa).

Low complexity predominate over residues 1–18 (MDDPAAPGPAGSPANDNG). Residues 1–58 (MDDPAAPGPAGSPANDNGNGNGNGNGNGNGGKGKPAVPKGRETFRNQRRESEGSVDCP) are disordered. The span at 19-33 (NGNGNGNGNGNGGKG) shows a compositional bias: gly residues. Over residues 39–52 (KGRETFRNQRRESE) the composition is skewed to basic and acidic residues. Ser-328, Ser-339, and Ser-364 each carry phosphoserine. The segment at 331–355 (SYTLDLGESQLAPPPSKLRGRRGSR) is disordered. Residues 370–422 (ERDLFKTEEPATEEEEESAADGERTLDGELDLLEQDPLVPPPPSQTPLSTDRV) form a disordered region. The span at 379 to 389 (PATEEEEESAA) shows a compositional bias: acidic residues.

It belongs to the STRIP family. Part of the core of STRIPAK complexes composed of PP2A catalytic and scaffolding subunits, the striatins (PP2A regulatory subunits), the striatin-associated proteins MOB4, STRIP1 and STRIP2, PDCD10 and members of the STE20 kinases, such as STK24 and STK26. Interacts with CTTNBP2NL.

It localises to the cytoplasm. Plays a role in the regulation of cell morphology and cytoskeletal organization. Required in the control of cell shape. Calmodulin-binding scaffolding protein which is the center of the striatin-interacting phosphatase and kinase (STRIPAK) complexes. STRIPAK complexes have critical roles in protein (de)phosphorylation and are regulators of multiple signaling pathways including Hippo, MAPK, nuclear receptor and cytoskeleton remodeling. Different types of STRIPAK complexes are involved in a variety of biological processes such as cell growth, differentiation, apoptosis, metabolism and immune regulation. This is Striatin-interacting proteins 2 (Strip2) from Mus musculus (Mouse).